The primary structure comprises 237 residues: Probable transcriptional regulatory protein WS1016 (237 aa).

The protein belongs to the TACO1 family.

It localises to the cytoplasm. In Wolinella succinogenes (strain ATCC 29543 / DSM 1740 / CCUG 13145 / JCM 31913 / LMG 7466 / NCTC 11488 / FDC 602W) (Vibrio succinogenes), this protein is Probable transcriptional regulatory protein WS1016.